Here is a 489-residue protein sequence, read N- to C-terminus: Rhamnulokinase (489 aa).

Residue 13 to 17 participates in ATP binding; sequence ASSGR. The cysteines at positions 68 and 222 are disulfide-linked. Substrate contacts are provided by residues Gly-83 and 236–238; that span reads HDT. The active-site Proton acceptor is the Asp-237. Residue Thr-259 coordinates ATP. Asn-296 lines the substrate pocket. Gln-304 is a binding site for ATP. Cys-353 and Cys-370 are disulfide-bonded. Gly-402 contributes to the ATP binding site. Cys-413 and Cys-417 form a disulfide bridge.

It belongs to the rhamnulokinase family. Mg(2+) serves as cofactor.

The enzyme catalyses L-rhamnulose + ATP = L-rhamnulose 1-phosphate + ADP + H(+). It functions in the pathway carbohydrate degradation; L-rhamnose degradation; glycerone phosphate from L-rhamnose: step 2/3. Functionally, involved in the catabolism of L-rhamnose (6-deoxy-L-mannose). Catalyzes the transfer of the gamma-phosphate group from ATP to the 1-hydroxyl group of L-rhamnulose to yield L-rhamnulose 1-phosphate. This chain is Rhamnulokinase, found in Salmonella heidelberg (strain SL476).